The chain runs to 637 residues: MSDGNDFAELLWENGQAVVHGRKKHPQPAFPPFGFFGGTGGGGGGSSSRAQERQPGGIDAFAKVGGGFGALGMAPAVHDFASGFGATTQDNGDDDTVPWIHYPIIDDEDAAAPAALAAADYGSDFFSELQAAAAAAAAAAPPTDLASLPASNHNGATNNRNAPVATTTTREPSKESHGGLSVPTTRAEPQPQPQLAAAKLPRSSGSGGGEGVMNFSLFSRPAVLARATLESAQRTQGTDNKASNVTASNRVESTVVQTASGPRSAPAFADQRAAAWPPQPKEMPFASTAAAPMAPAVNLHHEMGRDRAGRTMPVHKTEARKAPEATVATSSVCSGNGAGSDELWRQQKRKCQAQAECSASQDDDLDDEPGVLRKSGTRSTKRSRTAEVHNLSERRRRDRINEKMRALQELIPNCNKIDKASMLDEAIEYLKTLQLQVQMMSMGTGLCIPPMLLPTAMQHLQIPPMAHFPHLGMGLGYGMGVFDMSNTGALQMPPMPGAHFPCPMIPGASPQGLGIPGTSTMPMFGVPGQTIPSSASSVPPFASLAGLPVRPSGVPQVSGAMANMVQDQQQGIANQQQQCLNKEAIQGANPGDSQMQIIMQGDNENFRIPSSAQTKSSQFSDGTGKGTNARERDGAET.

Residues 35-46 show a composition bias toward gly residues; it reads FFGGTGGGGGGS. Disordered stretches follow at residues 35–54, 146–213, and 356–397; these read FFGG…QERQ, ASLP…EGVM, and ECSA…RRRR. Positions 149 to 170 are enriched in polar residues; sequence PASNHNGATNNRNAPVATTTTR. Positions 384 to 397 are basic motif; that stretch reads RTAEVHNLSERRRR. Residues 384-397 show a composition bias toward basic and acidic residues; sequence RTAEVHNLSERRRR. Residues 384–433 enclose the bHLH domain; that stretch reads RTAEVHNLSERRRRDRINEKMRALQELIPNCNKIDKASMLDEAIEYLKTL. Positions 398–433 are helix-loop-helix motif; the sequence is DRINEKMRALQELIPNCNKIDKASMLDEAIEYLKTL. Positions 601 to 637 are disordered; sequence GDNENFRIPSSAQTKSSQFSDGTGKGTNARERDGAET. Residues 608–621 show a composition bias toward polar residues; it reads IPSSAQTKSSQFSD. The span at 628 to 637 shows a compositional bias: basic and acidic residues; the sequence is NARERDGAET.

The protein belongs to the bHLH protein family. As to quaternary structure, interacts with LF and PRR1.

The protein localises to the nucleus. Transcription factor that may act as negative regulator of phyB-dependent light signal transduction. This chain is Transcription factor PHYTOCHROME INTERACTING FACTOR-LIKE 15, found in Oryza sativa subsp. japonica (Rice).